A 256-amino-acid chain; its full sequence is MYQFNFILSPLDQFEIRDLFSLNANVLGNIHLSITNIGLYLSIGLLLTLGYHLLAANNKIIPNNWSISQEAIYATVHSIVINQLNPTKGQLYFPFIYALFIFILVNNLIGMVPYSFASTSHFILTFSMSFTIVLGATFLGLQRHGLKFFSLFVPSGCPLGLLPLLVLIEFISYLSRNVSLGLRLAANILSGHMLLSILSGFTYNIMTSGILFFFLGLIPLAFIIAFSGLELAIAFIQAQVFVVLTCSYIKDGLDLH.

Positions 1–8 (MYQFNFIL) are cleaved as a propeptide — removed in mature form. The next 7 helical transmembrane spans lie at 34-54 (ITNI…YHLL), 92-112 (YFPF…IGMV), 121-141 (HFIL…FLGL), 148-168 (FFSL…LVLI), 186-206 (ANIL…YNIM), 209-229 (GILF…FSGL), and 230-250 (ELAI…SYIK).

It belongs to the ATPase A chain family. In terms of assembly, F-type ATPases have 2 components, CF(1) - the catalytic core - and CF(0) - the membrane proton channel. CF(1) has five subunits: alpha(3), beta(3), gamma(1), delta(1), epsilon(1). CF(0) has three main subunits: a, b and c.

It is found in the mitochondrion inner membrane. In terms of biological role, mitochondrial membrane ATP synthase (F(1)F(0) ATP synthase or Complex V) produces ATP from ADP in the presence of a proton gradient across the membrane which is generated by electron transport complexes of the respiratory chain. F-type ATPases consist of two structural domains, F(1) - containing the extramembraneous catalytic core and F(0) - containing the membrane proton channel, linked together by a central stalk and a peripheral stalk. During catalysis, ATP synthesis in the catalytic domain of F(1) is coupled via a rotary mechanism of the central stalk subunits to proton translocation. Key component of the proton channel; it may play a direct role in the translocation of protons across the membrane. This chain is ATP synthase subunit a (atp6), found in Emericella nidulans (Aspergillus nidulans).